The following is a 415-amino-acid chain: MSEEVSKNLSETLFVKHKQAKETSALTQYMPTSQSLLDEIKEKNGFSWYRNLRRLQWVWQGVDPIEQEQVLARIASSKHSRTDEQWLDTVMGYHSGNWAYEWTRLGMEHQKRAGEMTNEAASEALFSASLCYSIAGYPHLKSDNLAIQAQVLANSAYLEAAKKSKYIIKQLEIPFEKGKITAHLHLTNTDKPHPVVIVSAGLDSLQTDMWRLFRDHLAKHDIAMLTVDMPSVGYSSKYPLTEDYSRLHQAVLNELFSIPYVDHHRVGLIGFRFGGNAMVRLSFLEQEKIKACVILGAPIHDIFASPQKLQQMPKMYLDVLASRLGKSVVDIYSLSGQMAAWSLKVQGFLSSRKTKVPILAMSLEGDPVSPYSDNQMVAFFSTYGKAKKISSKTITQGYEQSLDLAIKWLEDELLR.

This sequence belongs to the FrsA family. As to quaternary structure, monomer in solution. Homodimer. Forms a 1:1 complex with the unphosphorylated form of the EIIA component of the glucose-specific PTS system (IIAGlc).

It catalyses the reaction a carboxylic ester + H2O = an alcohol + a carboxylate + H(+). Its function is as follows. Catalyzes the hydrolysis of esters. In vitro, prefers short chain alkanoate ester as substrate. Displays highest activity towards p-nitrophenyl acetate (pNPA). Has weaker activity towards p-nitrophenyl butyrate (pNPB). In Vibrio vulnificus (strain CMCP6), this protein is Esterase FrsA.